The primary structure comprises 1007 residues: Beta-galactosidase (1007 aa).

A disordered region spans residues 29–48; that stretch reads TIPPHSDHESFQSQEELEEG. Glu-465 acts as the Proton donor in catalysis. Glu-532 acts as the Nucleophile in catalysis.

This sequence belongs to the glycosyl hydrolase 2 family. Monomer.

The catalysed reaction is Hydrolysis of terminal non-reducing beta-D-galactose residues in beta-D-galactosides.. The protein is Beta-galactosidase (lacZ) of Lactobacillus delbrueckii subsp. bulgaricus.